We begin with the raw amino-acid sequence, 160 residues long: Cytochrome b6-f complex subunit 4 (160 aa).

Helical transmembrane passes span 36–56, 95–115, and 131–151; these read LLYV…GLAV, LLGV…PFIE, and LVFI…CLPI.

The protein belongs to the cytochrome b family. PetD subfamily. As to quaternary structure, the 4 large subunits of the cytochrome b6-f complex are cytochrome b6, subunit IV (17 kDa polypeptide, petD), cytochrome f and the Rieske protein, while the 4 small subunits are petG, petL, petM and petN. The complex functions as a dimer.

It is found in the plastid. It localises to the chloroplast thylakoid membrane. Functionally, component of the cytochrome b6-f complex, which mediates electron transfer between photosystem II (PSII) and photosystem I (PSI), cyclic electron flow around PSI, and state transitions. The protein is Cytochrome b6-f complex subunit 4 of Trieres chinensis (Marine centric diatom).